A 147-amino-acid chain; its full sequence is Hemoglobin subunit epsilon (147 aa).

Positions 3-147 constitute a Globin domain; that stretch reads HWSAEEKQLI…VAHALARKYH (145 aa). Heme b is bound by residues histidine 64 and histidine 93.

Belongs to the globin family. As to quaternary structure, heterotetramer of two epsilon chains and two alpha chains. Hemoglobin E (Hbe) contains a alpha-A chains while hemoglobin M (Hbm) contains alpha-D chains.

Functionally, beta-type chain found in early embryos. The protein is Hemoglobin subunit epsilon (HBE) of Gallus gallus (Chicken).